Consider the following 790-residue polypeptide: Probable phosphoketolase (790 aa).

Belongs to the XFP family. Requires thiamine diphosphate as cofactor.

The sequence is that of Probable phosphoketolase from Nitrosomonas europaea (strain ATCC 19718 / CIP 103999 / KCTC 2705 / NBRC 14298).